Consider the following 183-residue polypeptide: UPF0200 protein Memar_1556 (183 aa).

Glycine 8–glycine 15 provides a ligand contact to ATP.

This sequence belongs to the UPF0200 family.

The chain is UPF0200 protein Memar_1556 from Methanoculleus marisnigri (strain ATCC 35101 / DSM 1498 / JR1).